The sequence spans 428 residues: Cyclic AMP-responsive element-binding protein 3-like protein 3-A (428 aa).

At 1-286 (MENYSDQGGD…VMNGSNKPVQ (286 aa)) the chain is on the cytoplasmic side. Residues 67-83 (VSGSPVWSPSPSDSGIS) are compositionally biased toward low complexity. The interval 67 to 104 (VSGSPVWSPSPSDSGISEDPHSDHIDSPPPNASPPMEP) is disordered. The span at 93 to 103 (SPPPNASPPME) shows a compositional bias: pro residues. The bZIP domain occupies 210-273 (ILKKIRRKIR…ISLMEQLRRL (64 aa)). Positions 212 to 241 (KKIRRKIRNKQSAQESRKKKKEYIDGLESR) are basic motif. Residues 252-273 (LQRKVFQLEKCNISLMEQLRRL) form a leucine-zipper region. Residues 287-303 (AGTCVLVLLLSFTLILL) form a helical; Signal-anchor for type II membrane protein membrane-spanning segment. The Lumenal segment spans residues 304-428 (PNLKPFTDTK…SRRSPHADDM (125 aa)). Residues 381–428 (TEYDPESHNHSFDQHDEHHHGDPITGHVATVTLNPRRGSRRSPHADDM) form a disordered region. A compositionally biased stretch (basic and acidic residues) spans 385 to 402 (PESHNHSFDQHDEHHHGD). Asn389 is a glycosylation site (N-linked (GlcNAc...) asparagine).

Belongs to the bZIP family. ATF subfamily. As to quaternary structure, binds DNA as a dimer. Controlled by regulated intramembrane proteolysis (RIP). A fragment containing the cytoplasmic transcription factor domain is released by proteolysis. The cleavage seems to be performed sequentially by site-1 and site-2 proteases.

It localises to the endoplasmic reticulum membrane. It is found in the nucleus. Functionally, transcriptional activator. Binds the cAMP response element (CRE). Activates transcription through box-B element and CRE. Seems to function synergistically with atf6. Regulates FGF21 transcription. The sequence is that of Cyclic AMP-responsive element-binding protein 3-like protein 3-A (creb3l3a) from Danio rerio (Zebrafish).